Consider the following 225-residue polypeptide: Uridine kinase (225 aa).

Residue Gly12–Thr19 participates in ATP binding.

It belongs to the uridine kinase family.

It localises to the cytoplasm. The catalysed reaction is uridine + ATP = UMP + ADP + H(+). The enzyme catalyses cytidine + ATP = CMP + ADP + H(+). It functions in the pathway pyrimidine metabolism; CTP biosynthesis via salvage pathway; CTP from cytidine: step 1/3. The protein operates within pyrimidine metabolism; UMP biosynthesis via salvage pathway; UMP from uridine: step 1/1. The chain is Uridine kinase from Halobacterium salinarum (strain ATCC 700922 / JCM 11081 / NRC-1) (Halobacterium halobium).